A 381-amino-acid polypeptide reads, in one-letter code: Tryptophan--tRNA ligase (381 aa).

Positions 82–90 (PSLGMHIGH) match the 'HIGH' region motif. A 'KMSKS' region motif is present at residues 254 to 258 (KMSSS).

The protein belongs to the class-I aminoacyl-tRNA synthetase family.

The protein resides in the cytoplasm. The catalysed reaction is tRNA(Trp) + L-tryptophan + ATP = L-tryptophyl-tRNA(Trp) + AMP + diphosphate + H(+). The sequence is that of Tryptophan--tRNA ligase from Sulfurisphaera tokodaii (strain DSM 16993 / JCM 10545 / NBRC 100140 / 7) (Sulfolobus tokodaii).